The primary structure comprises 380 residues: Succinyl-diaminopimelate desuccinylase (380 aa).

A Zn(2+)-binding site is contributed by H69. D71 is a catalytic residue. Position 102 (D102) interacts with Zn(2+). The active-site Proton acceptor is the E135. Residues E136, E164, and H353 each contribute to the Zn(2+) site.

This sequence belongs to the peptidase M20A family. DapE subfamily. Homodimer. It depends on Zn(2+) as a cofactor. Requires Co(2+) as cofactor.

It carries out the reaction N-succinyl-(2S,6S)-2,6-diaminopimelate + H2O = (2S,6S)-2,6-diaminopimelate + succinate. The protein operates within amino-acid biosynthesis; L-lysine biosynthesis via DAP pathway; LL-2,6-diaminopimelate from (S)-tetrahydrodipicolinate (succinylase route): step 3/3. Functionally, catalyzes the hydrolysis of N-succinyl-L,L-diaminopimelic acid (SDAP), forming succinate and LL-2,6-diaminopimelate (DAP), an intermediate involved in the bacterial biosynthesis of lysine and meso-diaminopimelic acid, an essential component of bacterial cell walls. The polypeptide is Succinyl-diaminopimelate desuccinylase (Cereibacter sphaeroides (strain ATCC 17029 / ATH 2.4.9) (Rhodobacter sphaeroides)).